Reading from the N-terminus, the 354-residue chain is Probable RNA methyltransferase AZOSEA28700 (354 aa).

The active-site Proton acceptor is Glu88. A Radical SAM core domain is found at 91–317 (LLPRDGLCVS…TKLRHSAGQD (227 aa)). A disulfide bridge links Cys98 with Cys322. Positions 105, 109, and 112 each coordinate [4Fe-4S] cluster. Residues 150–151 (GE), Ser180, 203–205 (SLH), and Asn279 each bind S-adenosyl-L-methionine. Cys322 serves as the catalytic S-methylcysteine intermediate.

Belongs to the radical SAM superfamily. RlmN family. Requires [4Fe-4S] cluster as cofactor.

It is found in the cytoplasm. This is Probable RNA methyltransferase AZOSEA28700 from Aromatoleum aromaticum (strain DSM 19018 / LMG 30748 / EbN1) (Azoarcus sp. (strain EbN1)).